We begin with the raw amino-acid sequence, 299 residues long: ATP phosphoribosyltransferase (299 aa).

It belongs to the ATP phosphoribosyltransferase family. Long subfamily. It depends on Mg(2+) as a cofactor.

The protein resides in the cytoplasm. It carries out the reaction 1-(5-phospho-beta-D-ribosyl)-ATP + diphosphate = 5-phospho-alpha-D-ribose 1-diphosphate + ATP. It participates in amino-acid biosynthesis; L-histidine biosynthesis; L-histidine from 5-phospho-alpha-D-ribose 1-diphosphate: step 1/9. With respect to regulation, feedback inhibited by histidine. In terms of biological role, catalyzes the condensation of ATP and 5-phosphoribose 1-diphosphate to form N'-(5'-phosphoribosyl)-ATP (PR-ATP). Has a crucial role in the pathway because the rate of histidine biosynthesis seems to be controlled primarily by regulation of HisG enzymatic activity. This chain is ATP phosphoribosyltransferase, found in Shewanella baltica (strain OS155 / ATCC BAA-1091).